A 356-amino-acid polypeptide reads, in one-letter code: uncharacterized protein (356 aa).

Residues 8–28 traverse the membrane as a helical segment; sequence ILGFVLFVLGAAIFLTEVMHS.

It to C.elegans C41C4.1 and C18B2.1.

Its subcellular location is the membrane. This is an uncharacterized protein from Caenorhabditis elegans.